The sequence spans 444 residues: Serine--tRNA ligase (444 aa).

243-245 (TAE) contacts L-serine. 274–276 (RSE) contacts ATP. Glutamate 297 contacts L-serine. 361–364 (EISS) contributes to the ATP binding site. Serine 397 is an L-serine binding site.

Belongs to the class-II aminoacyl-tRNA synthetase family. Type-1 seryl-tRNA synthetase subfamily. In terms of assembly, homodimer. The tRNA molecule binds across the dimer.

It localises to the cytoplasm. It carries out the reaction tRNA(Ser) + L-serine + ATP = L-seryl-tRNA(Ser) + AMP + diphosphate + H(+). The catalysed reaction is tRNA(Sec) + L-serine + ATP = L-seryl-tRNA(Sec) + AMP + diphosphate + H(+). The protein operates within aminoacyl-tRNA biosynthesis; selenocysteinyl-tRNA(Sec) biosynthesis; L-seryl-tRNA(Sec) from L-serine and tRNA(Sec): step 1/1. In terms of biological role, catalyzes the attachment of serine to tRNA(Ser). Is also able to aminoacylate tRNA(Sec) with serine, to form the misacylated tRNA L-seryl-tRNA(Sec), which will be further converted into selenocysteinyl-tRNA(Sec). The protein is Serine--tRNA ligase of Acidobacterium capsulatum (strain ATCC 51196 / DSM 11244 / BCRC 80197 / JCM 7670 / NBRC 15755 / NCIMB 13165 / 161).